A 325-amino-acid chain; its full sequence is MTAHWKQNQKNLMLFSGRAHPELAEAVAKELDVNVTPMTARDFANGEIYVRFEESVRGSDCFVLQSHTQPLNKWLMEQLLMIDALKRGSAKRITAILPFYPYARQDKKHRGREPISARLIADLMLTAGADRIVSVDLHTDQIQGFFDGPVDHMHAMPILTDHIKENYNLDNICVVSPDAGRVKVAEKWANTLGDAPMAFVHKTRSTEVANQVVANRVVGDVDGKDCVLLDDMIDTGGTIAGAVGVLKKAGAKSVVIACTHGVFSDPARERLSACGAEEVITTDTLPQSTEGWSNLTVLSIAPLLARTINEIFENGSVTTLFEGEA.

Residues 45-47 (NGE) and 104-105 (RQ) contribute to the ATP site. Residues His-138 and Asp-178 each contribute to the Mg(2+) site. The active site involves Lys-202. D-ribose 5-phosphate-binding positions include Arg-204, Asp-230, and 234–238 (DTGGT).

Belongs to the ribose-phosphate pyrophosphokinase family. Class I subfamily. As to quaternary structure, homohexamer. It depends on Mg(2+) as a cofactor.

It localises to the cytoplasm. It carries out the reaction D-ribose 5-phosphate + ATP = 5-phospho-alpha-D-ribose 1-diphosphate + AMP + H(+). Its pathway is metabolic intermediate biosynthesis; 5-phospho-alpha-D-ribose 1-diphosphate biosynthesis; 5-phospho-alpha-D-ribose 1-diphosphate from D-ribose 5-phosphate (route I): step 1/1. Functionally, involved in the biosynthesis of the central metabolite phospho-alpha-D-ribosyl-1-pyrophosphate (PRPP) via the transfer of pyrophosphoryl group from ATP to 1-hydroxyl of ribose-5-phosphate (Rib-5-P). In Corynebacterium glutamicum (strain ATCC 13032 / DSM 20300 / JCM 1318 / BCRC 11384 / CCUG 27702 / LMG 3730 / NBRC 12168 / NCIMB 10025 / NRRL B-2784 / 534), this protein is Ribose-phosphate pyrophosphokinase.